We begin with the raw amino-acid sequence, 100 residues long: Small ribosomal subunit protein uS14c (100 aa).

It belongs to the universal ribosomal protein uS14 family. As to quaternary structure, part of the 30S ribosomal subunit.

It localises to the plastid. The protein resides in the chloroplast. Its function is as follows. Binds 16S rRNA, required for the assembly of 30S particles. The chain is Small ribosomal subunit protein uS14c from Cyanidioschyzon merolae (strain NIES-3377 / 10D) (Unicellular red alga).